The following is a 188-amino-acid chain: Sec-independent protein translocase protein TatB (188 aa).

The chain crosses the membrane as a helical span at residues 1–21 (MFDIGWSELVVIGVVALVAIG). The tract at residues 147–188 (LPVPAETHALATTDLAPPDLAHPAPAHPEPTNSEPAKDAKAS) is disordered. Low complexity predominate over residues 160–170 (DLAPPDLAHPA).

The protein belongs to the TatB family. The Tat system comprises two distinct complexes: a TatABC complex, containing multiple copies of TatA, TatB and TatC subunits, and a separate TatA complex, containing only TatA subunits. Substrates initially bind to the TatABC complex, which probably triggers association of the separate TatA complex to form the active translocon.

The protein localises to the cell inner membrane. In terms of biological role, part of the twin-arginine translocation (Tat) system that transports large folded proteins containing a characteristic twin-arginine motif in their signal peptide across membranes. Together with TatC, TatB is part of a receptor directly interacting with Tat signal peptides. TatB may form an oligomeric binding site that transiently accommodates folded Tat precursor proteins before their translocation. The polypeptide is Sec-independent protein translocase protein TatB (Rhodopseudomonas palustris (strain HaA2)).